The sequence spans 296 residues: tRNA pseudouridine synthase B (296 aa).

Asp-38 (nucleophile) is an active-site residue.

The protein belongs to the pseudouridine synthase TruB family. Type 1 subfamily.

The enzyme catalyses uridine(55) in tRNA = pseudouridine(55) in tRNA. Its function is as follows. Responsible for synthesis of pseudouridine from uracil-55 in the psi GC loop of transfer RNAs. The protein is tRNA pseudouridine synthase B of Ehrlichia chaffeensis (strain ATCC CRL-10679 / Arkansas).